The chain runs to 527 residues: Transcription initiation factor TFIID subunit 6b (527 aa).

In terms of domain architecture, Histone-fold spans 3-99 (TKESIEVIAQ…NLEPTSGSKS (97 aa)). Disordered regions lie at residues 410–442 (SPPT…THQP) and 462–492 (MRGT…PKTS). Polar residues-rich tracts occupy residues 416 to 427 (VWKTNGKLTSPR) and 462 to 473 (MRGTTTVPQQSH).

It belongs to the TAF6 family. In terms of assembly, component of the TFIID complex. TFIID is composed of TATA binding protein (TBP) and a number of TBP-associated factors (TAFs) whose MWs range from 14-217 kDa. Interacts with TAF5 and TAF9. Expressed in roots, leaves, inflorescences and siliques.

The protein resides in the nucleus. Its function is as follows. TAFs are components of the transcription factor IID (TFIID) complex that is essential for mediating regulation of RNA polymerase transcription. Not redundant with TAF6. The protein is Transcription initiation factor TFIID subunit 6b (TAF6B) of Arabidopsis thaliana (Mouse-ear cress).